Consider the following 208-residue polypeptide: Ras-related protein Rab-6A (208 aa).

Serine 2 carries the post-translational modification N-acetylserine. Serine 23, valine 24, glycine 25, lysine 26, threonine 27, serine 28, aspartate 39, asparagine 40, tyrosine 42, and threonine 45 together coordinate GTP. Threonine 27 is a binding site for Mg(2+). The Switch 1 motif lies at arginine 32–phenylalanine 50. Mg(2+) is bound by residues threonine 45 and aspartate 68. The Switch 2 motif lies at threonine 69–valine 88. Position 71 (glycine 71) interacts with GTP. Tyrosine 82 is modified (O-AMP-tyrosine; by Legionella DrrA). Asparagine 126, lysine 127, aspartate 129, serine 156, alanine 157, and lysine 158 together coordinate GTP. The residue at position 184 (serine 184) is a Phosphoserine. S-geranylgeranyl cysteine attachment occurs at residues cysteine 206 and cysteine 208. At cysteine 208 the chain carries Cysteine methyl ester.

Belongs to the small GTPase superfamily. Rab family. In terms of assembly, interacts (GTP-bound) with DYNLRB1; the interaction is direct. Interacts with BICD1. Interacts with BICD2; the interaction is direct. Interacts (GTP-bound) with VPS13B. As to quaternary structure, interacts with BICD1. Interacts (GDP-bound) with DYNLRB1; the interaction is direct. Interacts (GTP-bound) with VPS13B. Interacts with BICDL1; leads to its accumulation in the pericentrosomal region. Interacts with SCYL1BP1. Interacts with VSP52. Interacts with RABGAP1. Interacts with GCC2 (via its GRIP domain). Interacts with RAB6IP1 (via its RUN 1 domain). Interacts with TMF1. Interacts with CIMAP3. Interacts (GTP-bound) with APBA1/MINT1 isoform 2, also called Mint1_826, but not with isoform 1. Interacts with RIC1; the interaction is direct with a preference for RAB6A-GDP. Interacts with RGP1; the interaction is direct with a preference for RAB6A-GDP. In terms of assembly, (Microbial infection) Interacts with human cytomegalovirus protein UL32. Mg(2+) serves as cofactor. In terms of processing, prenylated. In terms of tissue distribution, ubiquitous.

It is found in the golgi apparatus membrane. It localises to the cytoplasmic vesicle. The protein resides in the secretory vesicle. The protein localises to the acrosome membrane. It carries out the reaction GTP + H2O = GDP + phosphate + H(+). With respect to regulation, regulated by guanine nucleotide exchange factors (GEFs) which promote the exchange of bound GDP for free GTP. Regulated by GTPase activating proteins (GAPs) which increase the GTP hydrolysis activity. Inhibited by GDP dissociation inhibitors (GDIs). Its function is as follows. The small GTPases Rab are key regulators of intracellular membrane trafficking, from the formation of transport vesicles to their fusion with membranes. Rabs cycle between an inactive GDP-bound form and an active GTP-bound form that is able to recruit to membranes different sets of downstream effectors directly responsible for vesicle formation, movement, tethering and fusion. RAB6A acts as a regulator of COPI-independent retrograde transport from the Golgi apparatus towards the endoplasmic reticulum (ER). Has a low GTPase activity. Recruits VPS13B to the Golgi membrane. Plays a role in neuron projection development. The protein is Ras-related protein Rab-6A of Homo sapiens (Human).